Here is a 459-residue protein sequence, read N- to C-terminus: Exodeoxyribonuclease 7 large subunit (459 aa).

Belongs to the XseA family. Heterooligomer composed of large and small subunits.

It is found in the cytoplasm. The catalysed reaction is Exonucleolytic cleavage in either 5'- to 3'- or 3'- to 5'-direction to yield nucleoside 5'-phosphates.. In terms of biological role, bidirectionally degrades single-stranded DNA into large acid-insoluble oligonucleotides, which are then degraded further into small acid-soluble oligonucleotides. The protein is Exodeoxyribonuclease 7 large subunit of Yersinia pestis bv. Antiqua (strain Antiqua).